Reading from the N-terminus, the 241-residue chain is 1-(5-phosphoribosyl)-5-[(5-phosphoribosylamino)methylideneamino] imidazole-4-carboxamide isomerase (241 aa).

The active-site Proton acceptor is the Asp-8. The active-site Proton donor is Asp-129.

It belongs to the HisA/HisF family.

It localises to the cytoplasm. The catalysed reaction is 1-(5-phospho-beta-D-ribosyl)-5-[(5-phospho-beta-D-ribosylamino)methylideneamino]imidazole-4-carboxamide = 5-[(5-phospho-1-deoxy-D-ribulos-1-ylimino)methylamino]-1-(5-phospho-beta-D-ribosyl)imidazole-4-carboxamide. The protein operates within amino-acid biosynthesis; L-histidine biosynthesis; L-histidine from 5-phospho-alpha-D-ribose 1-diphosphate: step 4/9. The polypeptide is 1-(5-phosphoribosyl)-5-[(5-phosphoribosylamino)methylideneamino] imidazole-4-carboxamide isomerase (Chloroflexus aurantiacus (strain ATCC 29364 / DSM 637 / Y-400-fl)).